Here is a 112-residue protein sequence, read N- to C-terminus: Cytochrome c2 (112 aa).

Residues cysteine 14, cysteine 17, histidine 18, and methionine 91 each coordinate heme c.

This sequence belongs to the cytochrome c family. Binds 1 heme c group covalently per subunit.

Cytochrome c2 is found mainly in purple, non-sulfur, photosynthetic bacteria where it functions as the electron donor to the oxidized bacteriochlorophyll in the photophosphorylation pathway. However, it may also have a role in the respiratory chain and is found in some non-photosynthetic bacteria. The polypeptide is Cytochrome c2 (cycA) (Rhodospirillum rubrum).